The primary structure comprises 716 residues: ATP-dependent DNA helicase DinG (716 aa).

Residues 1–114 (MALTAALKAQ…PDLKFTAAFG (114 aa)) form an HD1 domain N-terminus region. A Helicase ATP-binding domain is found at 17–294 (ALQEQIPDFI…TCMEQFRPKT (278 aa)). Isoleucine 26, glutamine 31, lysine 60, and threonine 61 together coordinate ATP. The tract at residues 115–216 (RGRYVCPRNL…FFVARREIQE (102 aa)) is [4Fe-4S] domain. Positions 120, 194, 199, and 205 each coordinate [4Fe-4S] cluster. Residues 217 to 261 (AEVVVANHALVMAAMESEAVLPDPKNLLLVLDEGHHLPDVARDAL) are HD1 domain middle. Residues 248 to 251 (DEGH) carry the DEAH box motif. An arch domain region spans residues 262–438 (EMSAEITAPW…LHLWFHCVGI (177 aa)). The segment at 439–491 (RVSDQLERLLWRSIPHIIVTSATLRSLNSFSRLQEMSGLKEKAGDRFVALDSP) is HD1 domain middle. The interval 492–716 (FNHCEQGKIV…KTKSPRRRRR (225 aa)) is HD2 domain. Residues aspartate 599, arginine 656, and arginine 659 each contribute to the ATP site.

Belongs to the helicase family. DinG subfamily. Type 1 sub-subfamily. In terms of assembly, monomer in solution. It depends on [4Fe-4S] cluster as a cofactor. The cofactor is Mg(2+).

The enzyme catalyses Couples ATP hydrolysis with the unwinding of duplex DNA at the replication fork by translocating in the 5'-3' direction. This creates two antiparallel DNA single strands (ssDNA). The leading ssDNA polymer is the template for DNA polymerase III holoenzyme which synthesizes a continuous strand.. The catalysed reaction is ATP + H2O = ADP + phosphate + H(+). ATPase activity is 15-fold stimulated by single-stranded DNA (ssDNA). Reduction of the [4Fe-4S] cluster reversibly switches off helicase activity. Remains fully active after exposure to 100-fold excess of hydrogen peroxide, but the [4Fe-4S] cluster can be efficiently modified by nitric oxide (NO), forming the DinG-bound dinitrosyl iron complex with the concomitant inactivation of helicase activity. Helicase activity on G-quadruplex DNA is inhibited by porphyrin derivatives meso-tetra (N-methyl-4-pyridyl) porphine tetra tosylate (T4) and N-methyl mesoporphyrin IX (NMM). Helicase activity on forked duplexes is not inhibited by T4 or NMM. G-quadruplex ligands such as Pyridostatin, PhenDC3, BRACO-19 and Netropsin can alter recognition and unwinding of G-quadruplex DNAs; the effect is both ligand- and G-quadruplex DNA-specific. In terms of biological role, DNA-dependent ATPase and 5'-3' DNA helicase. Can also unwind DNA:RNA hybrid duplexes. Is active on D-loops, R-loops, and on forked structures. Unwinds G-quadruplex DNA in a 5'-3' direction; unwinding efficiency differs on different substrates. Does not appear to unwind replication forks or Holliday junctions. Translocates on single-stranded (ss)DNA with a 5'-3' polarity. In vitro at high concentrations also unwinds in a 3'-5' direction. May be involved in recombinational DNA repair and the resumption of replication after DNA damage. The [4Fe-4S] cluster is redox active at cellular potentials and is involved in DNA-mediated charge-transport signaling between DNA repair proteins from distinct pathways. DinG cooperates at long-range with endonuclease III, a base excision repair enzyme, using DNA charge transport to redistribute to regions of DNA damage. Binds 10-11 nucleotides of ssDNA in a positively-charged groove across the helicase domains. The polypeptide is ATP-dependent DNA helicase DinG (Escherichia coli (strain K12)).